The primary structure comprises 1349 residues: Periaxin (1349 aa).

S7 is modified (phosphoserine). One can recognise a PDZ domain in the interval L16–T99. Residues V70–L84 carry the Nuclear export signal motif. Residue S133 is modified to Phosphoserine. 41 tandem repeats follow at residues P402–K406, G410–K414, V418–K422, M426–V430, L431–R435, L436–E440, V444–K448, V452–A456, V457–R461, L462–Q466, L467–P471, E472–P476, E477–P481, E485–P489, L493–Q497, V501–K505, L506–K510, V514–A518, V519–R523, L524–Q528, V532–K536, L537–K549, V553–A557, V558–R562, L563–Q567, V571–K575, L576–K580, V589–A593, V594–H598, L599–Q603, V612–K616, L617–K621, L622–K626, V630–V634, V635–H639, V643–K647, V648–R652, L653–Q657, V661–H665, A669–K673, and L674–P678. The segment at P402–P678 is 41 X 5 AA approximate tandem repeats of [LVMGIE]-[PSM]-[EDKA]-[LIVMA]-[AQKHPRT]; that may have a tripeptide spacer of [ALKD]-[IPV]-[KPH]. Phosphoserine is present on residues S794 and S974. A compositionally biased stretch (basic and acidic residues) spans A1207 to K1218. The disordered stretch occupies residues A1207–I1349. Residues S1232–S1242 show a composition bias toward low complexity. Phosphoserine is present on residues S1236, S1240, S1242, S1289, S1295, and S1327.

Belongs to the periaxin family. Homodimer (via PDZ domain). Interacts with SCN10A. Found in a complex with SCN10A. Interacts with DRP2. Identified in a dystroglycan complex that contains at least PRX, DRP2, UTRN, DMD and DAG1. Detected in a complex composed of at least EZR, AHNAK, PPL and PRX. Identified in a complex with EZR, AHNAK, BFSP1, BFSP2, ANK2, PLEC, VIM and spectrin. In terms of tissue distribution, detected in eye lens (at protein level).

It is found in the nucleus. The protein resides in the cytoplasm. Its subcellular location is the cell membrane. It localises to the cell junction. The protein localises to the adherens junction. Scaffolding protein that functions as part of a dystroglycan complex in Schwann cells, and as part of EZR and AHNAK-containing complexes in eye lens fiber cells. Required for the maintenance of the peripheral myelin sheath that is essential for normal transmission of nerve impulses and normal perception of sensory stimuli. Required for normal transport of MBP mRNA from the perinuclear to the paranodal regions. Required for normal remyelination after nerve injury. Required for normal elongation of Schwann cells and normal length of the internodes between the nodes of Ranvier. The demyelinated nodes of Ranvier permit saltatory transmission of nerve impulses; shorter internodes cause slower transmission of nerve impulses. Required for the formation of appositions between the abaxonal surface of the myelin sheath and the Schwann cell plasma membrane; the Schwann cell cytoplasm is restricted to regions between these appositions. Required for the formation of Cajal bands and of Schmidt-Lanterman incisures that correspond to short, cytoplasm-filled regions on myelinated nerves. Recruits DRP2 to the Schwann cell plasma membrane. Required for normal protein composition of the eye lens fiber cell plasma membrane and normal eye lens fiber cell morphology. The sequence is that of Periaxin (PRX) from Bos taurus (Bovine).